The primary structure comprises 296 residues: Probable endonuclease 4 (296 aa).

Zn(2+)-binding residues include His68, His109, Glu144, Asp178, His181, His213, Asp226, His228, and Glu258.

It belongs to the AP endonuclease 2 family. The cofactor is Zn(2+).

It carries out the reaction Endonucleolytic cleavage to 5'-phosphooligonucleotide end-products.. Its function is as follows. Endonuclease IV plays a role in DNA repair. It cleaves phosphodiester bonds at apurinic or apyrimidinic (AP) sites, generating a 3'-hydroxyl group and a 5'-terminal sugar phosphate. This Staphylococcus saprophyticus subsp. saprophyticus (strain ATCC 15305 / DSM 20229 / NCIMB 8711 / NCTC 7292 / S-41) protein is Probable endonuclease 4.